A 389-amino-acid chain; its full sequence is Chorismate synthase (389 aa).

NADP(+) contacts are provided by R40 and R46. Residues R130–S132, Q251–A252, G297, K312–T316, and R338 each bind FMN.

Belongs to the chorismate synthase family. As to quaternary structure, homotetramer. Requires FMNH2 as cofactor.

It catalyses the reaction 5-O-(1-carboxyvinyl)-3-phosphoshikimate = chorismate + phosphate. It functions in the pathway metabolic intermediate biosynthesis; chorismate biosynthesis; chorismate from D-erythrose 4-phosphate and phosphoenolpyruvate: step 7/7. In terms of biological role, catalyzes the anti-1,4-elimination of the C-3 phosphate and the C-6 proR hydrogen from 5-enolpyruvylshikimate-3-phosphate (EPSP) to yield chorismate, which is the branch point compound that serves as the starting substrate for the three terminal pathways of aromatic amino acid biosynthesis. This reaction introduces a second double bond into the aromatic ring system. The protein is Chorismate synthase of Solibacter usitatus (strain Ellin6076).